The sequence spans 152 residues: UPF0178 protein Shewmr7_1635 (152 aa).

Belongs to the UPF0178 family.

The chain is UPF0178 protein Shewmr7_1635 from Shewanella sp. (strain MR-7).